An 845-amino-acid polypeptide reads, in one-letter code: Nuclear pore complex protein Nup107 (845 aa).

Disordered stretches follow at residues 1–26 (MADS…MPPQ) and 677–702 (QNRP…MASE). Polar residues-rich tracts occupy residues 7–26 (PRSS…MPPQ) and 685–694 (TSHAASSQDN).

This sequence belongs to the nucleoporin Nup84/Nup107 family. As to quaternary structure, part of the nuclear pore complex (NPC). In terms of tissue distribution, expressed in spermatocytes (at protein level).

The protein localises to the nucleus. The protein resides in the nuclear pore complex. It localises to the nucleus envelope. Its subcellular location is the nucleus membrane. It is found in the cytoplasm. The protein localises to the cytoskeleton. The protein resides in the spindle. It localises to the chromosome. Its subcellular location is the nucleus matrix. Plays a role in nuclear pore complex (NPC) assembly and maintenance. Required for nuclear import of Mad. Mediates the association between the nuclear pore complex and a subset of active chromatin regions adjacent to lamin-associated domains. Plays a role in double strand break repair by relocalizing the heterochromatic double strand breaks (DSBs) to the nuclear periphery as part of the homologous recombination (HR) repair process. Regulates cytokinesis during spermatocyte meiosis by maintaining type-B lamin Lam localization to the spindle envelope. Regulates female gonad development and oogenesis. This chain is Nuclear pore complex protein Nup107, found in Drosophila melanogaster (Fruit fly).